Consider the following 312-residue polypeptide: Ribonuclease Z (312 aa).

Zn(2+) contacts are provided by His-63, His-65, Asp-67, His-68, His-141, Asp-212, and His-270. Catalysis depends on Asp-67, which acts as the Proton acceptor.

This sequence belongs to the RNase Z family. As to quaternary structure, homodimer. Zn(2+) is required as a cofactor.

The catalysed reaction is Endonucleolytic cleavage of RNA, removing extra 3' nucleotides from tRNA precursor, generating 3' termini of tRNAs. A 3'-hydroxy group is left at the tRNA terminus and a 5'-phosphoryl group is left at the trailer molecule.. Zinc phosphodiesterase, which displays some tRNA 3'-processing endonuclease activity. Probably involved in tRNA maturation, by removing a 3'-trailer from precursor tRNA. The chain is Ribonuclease Z from Latilactobacillus sakei subsp. sakei (strain 23K) (Lactobacillus sakei subsp. sakei).